A 197-amino-acid polypeptide reads, in one-letter code: Nucleoside triphosphate pyrophosphatase (197 aa).

The active-site Proton acceptor is the Asp-75.

Belongs to the Maf family. A divalent metal cation is required as a cofactor.

It localises to the cytoplasm. The catalysed reaction is a ribonucleoside 5'-triphosphate + H2O = a ribonucleoside 5'-phosphate + diphosphate + H(+). The enzyme catalyses a 2'-deoxyribonucleoside 5'-triphosphate + H2O = a 2'-deoxyribonucleoside 5'-phosphate + diphosphate + H(+). Its function is as follows. Nucleoside triphosphate pyrophosphatase. May have a dual role in cell division arrest and in preventing the incorporation of modified nucleotides into cellular nucleic acids. The sequence is that of Nucleoside triphosphate pyrophosphatase from Haemophilus ducreyi (strain 35000HP / ATCC 700724).